We begin with the raw amino-acid sequence, 143 residues long: Large ribosomal subunit protein uL11 (143 aa).

This sequence belongs to the universal ribosomal protein uL11 family. Part of the ribosomal stalk of the 50S ribosomal subunit. Interacts with L10 and the large rRNA to form the base of the stalk. L10 forms an elongated spine to which L12 dimers bind in a sequential fashion forming a multimeric L10(L12)X complex. In terms of processing, one or more lysine residues are methylated.

Its function is as follows. Forms part of the ribosomal stalk which helps the ribosome interact with GTP-bound translation factors. This chain is Large ribosomal subunit protein uL11, found in Rhizobium etli (strain ATCC 51251 / DSM 11541 / JCM 21823 / NBRC 15573 / CFN 42).